Reading from the N-terminus, the 77-residue chain is NAD(P)H-quinone oxidoreductase subunit L (77 aa).

2 consecutive transmembrane segments (helical) span residues 10 to 30 and 48 to 68; these read LLIA…LPAG and LVMY…SPFL.

Belongs to the complex I NdhL subunit family. In terms of assembly, NDH-1 can be composed of about 15 different subunits; different subcomplexes with different compositions have been identified which probably have different functions.

The protein resides in the cellular thylakoid membrane. It catalyses the reaction a plastoquinone + NADH + (n+1) H(+)(in) = a plastoquinol + NAD(+) + n H(+)(out). It carries out the reaction a plastoquinone + NADPH + (n+1) H(+)(in) = a plastoquinol + NADP(+) + n H(+)(out). Functionally, NDH-1 shuttles electrons from an unknown electron donor, via FMN and iron-sulfur (Fe-S) centers, to quinones in the respiratory and/or the photosynthetic chain. The immediate electron acceptor for the enzyme in this species is believed to be plastoquinone. Couples the redox reaction to proton translocation, and thus conserves the redox energy in a proton gradient. Cyanobacterial NDH-1 also plays a role in inorganic carbon-concentration. The chain is NAD(P)H-quinone oxidoreductase subunit L from Picosynechococcus sp. (strain ATCC 27264 / PCC 7002 / PR-6) (Agmenellum quadruplicatum).